The following is a 268-amino-acid chain: MLESKLENLRQFFGELDRALIAYSGGVDSTLVAKVAYDVLGQNAVAITAVSPSLLPEELEDAQAQAQWIGIAHELVQTNEMANPNYTANPENRCYFCKSELHDTLQPLALALGYNYVIDGVNGDDLRDYRPGIQAAKERGGRSPLAELQISKLEVRQISQLLGLPWWDKPAQPCLSSRFPYGEEITVEKLQRVGRAEIYLRRLGYNQVRVRSEQNLARIELPPEQIQQFVQDVSLGELVQTFQNFGFLYVTLDLEGYQSGKLNRVLTK.

Belongs to the LarE family.

This is an uncharacterized protein from Synechocystis sp. (strain ATCC 27184 / PCC 6803 / Kazusa).